A 593-amino-acid chain; its full sequence is Translocon at the outer membrane of chloroplasts 64 (593 aa).

Residues 1–4 (MKSM) lie on the Chloroplast intermembrane side of the membrane. The helical transmembrane segment at 5 to 25 (ASPSSQIWVILGLGLAGIYVL) threads the bilayer. Residues 26–144 (TRKLTQAVKE…NPAVPNRVPG (119 aa)) lie on the Cytoplasmic side of the membrane. A helical transmembrane segment spans residues 145–165 (GSSSGAAVAVAANFVDFSLGV). The Chloroplast intermembrane segment spans residues 166-403 (DTSGGVRVPA…LSHDYQSRAL (238 aa)). A helical membrane pass occupies residues 404–424 (SLLSIASISGCCQVTVPLGFF). Topologically, residues 425 to 593 (DKNPVSVSLI…SAERLRKLFQ (169 aa)) are cytoplasmic. 3 TPR repeats span residues 477 to 510 (AEIS…CGNN), 511 to 544 (ATYY…DKKN), and 545 to 578 (VKAY…EPTN).

Part of the Toc complex and of the intermembrane space complex. Interacts with TOC12, TIC22 and with the cytosolic domain of TOC34 in a GTP dependent manner. Interacts (via TPR region) with HSP90 and with HSP70 with low efficiency.

It localises to the plastid. Its subcellular location is the chloroplast outer membrane. Chaperone receptor mediating Hsp90-dependent protein targeting to chloroplasts. Bi-functional preprotein receptor acting on both sides of the membrane. This Pisum sativum (Garden pea) protein is Translocon at the outer membrane of chloroplasts 64 (TOC64).